The sequence spans 201 residues: dITP/XTP pyrophosphatase (201 aa).

7 to 12 (TNNKGK) contributes to the substrate binding site. The Mg(2+) site is built by glutamate 40 and aspartate 69. Residue aspartate 69 is the Proton acceptor of the active site. Residues serine 70, 152–155 (FGYD), lysine 175, and 180–181 (HR) each bind substrate.

The protein belongs to the HAM1 NTPase family. Homodimer. It depends on Mg(2+) as a cofactor.

It carries out the reaction XTP + H2O = XMP + diphosphate + H(+). The enzyme catalyses dITP + H2O = dIMP + diphosphate + H(+). It catalyses the reaction ITP + H2O = IMP + diphosphate + H(+). Its function is as follows. Pyrophosphatase that catalyzes the hydrolysis of nucleoside triphosphates to their monophosphate derivatives, with a high preference for the non-canonical purine nucleotides XTP (xanthosine triphosphate), dITP (deoxyinosine triphosphate) and ITP. Seems to function as a house-cleaning enzyme that removes non-canonical purine nucleotides from the nucleotide pool, thus preventing their incorporation into DNA/RNA and avoiding chromosomal lesions. In Desulforamulus reducens (strain ATCC BAA-1160 / DSM 100696 / MI-1) (Desulfotomaculum reducens), this protein is dITP/XTP pyrophosphatase.